The following is a 218-amino-acid chain: Adenylate kinase (218 aa).

10–15 (GAGKGT) is an ATP binding site. The tract at residues 30-59 (STGDMIRETIKSGSVLGQELKKVLDAGELV) is NMP. Residues T31, R36, 57–59 (ELV), and Q92 contribute to the AMP site. Residues 122–159 (GRRIHPASGRTYHTKFNPPKVADKDDVTGEPLITRTDD) form an LID region. Residues R123 and 132-133 (TY) each bind ATP. AMP contacts are provided by R156 and R167. Q202 is a binding site for ATP.

It belongs to the adenylate kinase family. In terms of assembly, monomer.

It is found in the cytoplasm. The enzyme catalyses AMP + ATP = 2 ADP. It functions in the pathway purine metabolism; AMP biosynthesis via salvage pathway; AMP from ADP: step 1/1. In terms of biological role, catalyzes the reversible transfer of the terminal phosphate group between ATP and AMP. Plays an important role in cellular energy homeostasis and in adenine nucleotide metabolism. The protein is Adenylate kinase of Francisella tularensis subsp. holarctica (strain LVS).